The following is a 183-amino-acid chain: Capsid protein (183 aa).

The tract at residues 136-183 (NAPILSTLPETTVVRRRGRSPRRRTPSPRRRRSQSPRRRRSKSRESQC) is disordered. Basic residues predominate over residues 149 to 177 (VRRRGRSPRRRTPSPRRRRSQSPRRRRSK). A phosphoserine; by host mark is found at serine 155, serine 162, and serine 170. The stretch at 155 to 160 (SPRRRT) is one 1; half-length repeat. Residues 155-176 (SPRRRTPSPRRRRSQSPRRRRS) are 3 X 7 AA repeats of S-P-R-R-R-[PR]-S. Residues 158-175 (RRTPSPRRRRSQSPRRRR) carry the Bipartite nuclear localization signal motif. A run of 2 repeats spans residues 162–168 (SPRRRRS) and 170–176 (SPRRRRS). The tract at residues 177–183 (KSRESQC) is RNA binding.

It belongs to the orthohepadnavirus core antigen family. In terms of assembly, homodimerizes, then multimerizes. Interacts with cytosol exposed regions of viral L glycoprotein present in the reticulum-to-Golgi compartment. Interacts with human FLNB. Phosphorylated form interacts with host importin alpha; this interaction depends on the exposure of the NLS, which itself depends upon genome maturation and/or phosphorylation of the capsid protein. Interacts with host NUP153. In terms of processing, phosphorylated by host SRPK1, SRPK2, and maybe protein kinase C or GAPDH. Phosphorylation is critical for pregenomic RNA packaging. Protein kinase C phosphorylation is stimulated by HBx protein and may play a role in transport of the viral genome to the nucleus at the late step during the viral replication cycle.

It localises to the virion. The protein resides in the host cytoplasm. In terms of biological role, self assembles to form an icosahedral capsid. Most capsids appear to be large particles with an icosahedral symmetry of T=4 and consist of 240 copies of capsid protein, though a fraction forms smaller T=3 particles consisting of 180 capsid proteins. Entering capsids are transported along microtubules to the nucleus. Phosphorylation of the capsid is thought to induce exposure of nuclear localization signal in the C-terminal portion of the capsid protein that allows binding to the nuclear pore complex via the importin (karyopherin-) alpha and beta. Capsids are imported in intact form through the nuclear pore into the nuclear basket, where it probably binds NUP153. Only capsids that contain the mature viral genome can release the viral DNA and capsid protein into the nucleoplasm. Immature capsids get stuck in the basket. Capsids encapsulate the pre-genomic RNA and the P protein. Pre-genomic RNA is reverse-transcribed into DNA while the capsid is still in the cytoplasm. The capsid can then either be directed to the nucleus, providing more genomes for transcription, or bud through the endoplasmic reticulum to provide new virions. The protein is Capsid protein of Hepatitis B virus genotype C subtype ar (isolate Japan/S-207/1988) (HBV-C).